A 1261-amino-acid polypeptide reads, in one-letter code: AT-rich interactive domain-containing protein 4A (1261 aa).

Residues 4 to 121 are DNA-binding; the sequence is ADEPAYLTVG…RHFAESETLD (118 aa). Disordered regions lie at residues 142 to 169, 273 to 310, and 435 to 470; these read RGRRSSLPITEDEKEEESSEEEDEDKRR, ESSSSDDEECPAEEHEEEKEKEAKKEEEELPEEELDPE, and APEMPLLDVKSEPEENTDSNSESDREDTELKSPRGR. Composition is skewed to acidic residues over residues 151–165 and 276–289; these read TEDEKEEESSEEEDE and SSDDEECPAEEHEE. Over residues 290 to 299 the composition is skewed to basic and acidic residues; it reads EKEKEAKKEE. Residues 300–310 are compositionally biased toward acidic residues; that stretch reads EELPEEELDPE. Positions 309–401 constitute an ARID domain; the sequence is PEERDNFLQQ…YLYGFEEYCR (93 aa). Residue K481 forms a Glycyl lysine isopeptide (Lys-Gly) (interchain with G-Cter in SUMO2) linkage. Disordered stretches follow at residues 498-582, 633-768, and 842-953; these read LENK…GTKV, WPLD…EAGD, and FSST…EDAM. Residues 512 to 522 show a composition bias toward basic and acidic residues; sequence PAAKREHELLF. Positions 526–536 are enriched in basic residues; it reads STPKNKEKKIK. Over residues 541-551 the composition is skewed to acidic residues; the sequence is SERDSDEEEEK. Residues 552–564 are compositionally biased toward basic and acidic residues; that stretch reads SQEREETESRCDS. The span at 565-574 shows a compositional bias: acidic residues; that stretch reads EGEDEEDDTE. Positions 579–631 constitute a Tudor-knot domain; it reads GTKVKVKYGRGKTQKIYEASIKSTEMDDGEILYLVHYYGWNVRYDEWVKADRI. Residues 640–649 are compositionally biased toward basic residues; the sequence is PKKKQKKKVK. A compositionally biased stretch (basic and acidic residues) spans 650 to 665; it reads NKEDSEKDEKRDEERQ. Polar residues predominate over residues 676 to 689; the sequence is STFSPNMPYSLSKT. S679 carries the post-translational modification Phosphoserine. Low complexity predominate over residues 690 to 702; it reads SNSEGKSDSCSSD. Over residues 708–753 the composition is skewed to basic and acidic residues; the sequence is QLEKSSGGEDLSPDVKEELEKNENAHDDKLDEENPKIVHISKENDR. Residue S719 is modified to Phosphoserine. Glycyl lysine isopeptide (Lys-Gly) (interchain with G-Cter in SUMO2) cross-links involve residues K723 and K743. Position 867 is a phosphoserine (S867). 2 stretches are compositionally biased toward basic and acidic residues: residues 899–909 and 929–947; these read KGAHVEQHFET and TSEKSDSPAEEEPVHTPLK. Residues 955 to 968 are retinoblastoma protein binding; sequence LIGPETLVCHEVDL. The segment covering 1067 to 1080 has biased composition (basic and acidic residues); it reads HERESREKGQKRPS. Disordered regions lie at residues 1067-1173 and 1216-1261; these read HERE…RTYK and RRRK…VECR. S1113 and S1149 each carry phosphoserine. The span at 1230 to 1252 shows a compositional bias: low complexity; that stretch reads HAGASMSSASSDTGMSPSSSSPP.

Identified in mSin3A corepressor complexes together with SIN3A, SIN3B, RBBP4, RBBP7, SAP30, BRMS1, HDAC1 and HDAC2. Interacts with BRMS1. Interacts with RB1. Interacts with ARID4B. Interacts with AR. As to expression, expressed in Sertoli cells of the testis.

It localises to the nucleus. DNA-binding protein which modulates activity of several transcription factors including RB1 (retinoblastoma-associated protein) and AR (androgen receptor). May function as part of an mSin3A repressor complex. Has no intrinsic transcriptional activity. Plays a role in the regulation of epigenetic modifications at the PWS/AS imprinting center near the SNRPN promoter, where it might function as part of a complex with RB1 and ARID4B. Involved in spermatogenesis, together with ARID4B, where it acts as a transcriptional coactivator for AR and enhances expression of genes required for sperm maturation. Regulates expression of the tight junction protein CLDN3 in the testis, which is important for integrity of the blood-testis barrier. Plays a role in myeloid homeostasis where it regulates the histone methylation state of bone marrow cells and expression of various genes involved in hematopoiesis. May function as a leukemia suppressor. The chain is AT-rich interactive domain-containing protein 4A from Mus musculus (Mouse).